The sequence spans 1232 residues: DNA-directed RNA polymerase subunit beta (1232 aa).

Positions 1170–1232 (SVDEDADELE…LDLDDFGDEH (63 aa)) are disordered. The span at 1171-1180 (VDEDADELEV) shows a compositional bias: acidic residues. The span at 1189–1198 (PEEKEEKEKE) shows a compositional bias: basic and acidic residues. Acidic residues predominate over residues 1199-1232 (DSDEYDDLREEDVEPDLEELSLDDLDLDDFGDEH).

The protein belongs to the RNA polymerase beta chain family. The RNAP catalytic core consists of 2 alpha, 1 beta, 1 beta' and 1 omega subunit. When a sigma factor is associated with the core the holoenzyme is formed, which can initiate transcription.

The catalysed reaction is RNA(n) + a ribonucleoside 5'-triphosphate = RNA(n+1) + diphosphate. Its function is as follows. DNA-dependent RNA polymerase catalyzes the transcription of DNA into RNA using the four ribonucleoside triphosphates as substrates. This is DNA-directed RNA polymerase subunit beta from Clostridium botulinum (strain Hall / ATCC 3502 / NCTC 13319 / Type A).